The chain runs to 866 residues: Retinoblastoma-related protein 2 (866 aa).

The domain A stretch occupies residues 274-475 (TPITSAMTTA…EKGSSLYNSL (202 aa)). A pocket region spans residues 274–721 (TPITSAMTTA…NEVFVPAAKP (448 aa)). Residues 476–593 (IVARPSVASE…PVGGNEKCAD (118 aa)) are spacer. Residues 513–551 (LPATPSKKRAAGRDDNADPRSPKRPCNESRSPVVEHNLQ) are disordered. Positions 523 to 539 (AGRDDNADPRSPKRPCN) are enriched in basic and acidic residues. The interval 594-721 (VTIQIFFSKI…NEVFVPAAKP (128 aa)) is domain B. 2 disordered regions span residues 731–754 (TRPE…PFPN) and 839–866 (SLGQ…KPDT). Over residues 841–850 (GQPNGGSTSL) the composition is skewed to polar residues.

This sequence belongs to the retinoblastoma protein (RB) family. Ubiquitous.

The protein resides in the nucleus. Functionally, regulator of biological processes that recruits a histone deacetylase to control gene transcription. May play a role in the entry into mitosis, negatively regulating the cell proliferation. Formation of stable complexes with geminiviridae replication-associated proteins may create a cellular environment which favors viral DNA replication. The protein is Retinoblastoma-related protein 2 (RBR2) of Zea mays (Maize).